A 448-amino-acid chain; its full sequence is GA-binding protein subunit beta-2 (448 aa).

ANK repeat units follow at residues 5–34 (DLGK…PFTT), 37–66 (LGTS…SRDA), 70–99 (VDRT…DVNA), 103–132 (LKMT…DVHA), and 136–166 (FDKS…QVNV). Residue S256 is modified to Phosphoserine. Disordered regions lie at residues 325–354 (EEEE…GNER) and 420–448 (ELEE…TVSS). Residues 337–354 (RIGEKTNSVEESKEGNER) show a composition bias toward basic and acidic residues. Residues 345–395 (VEESKEGNERELLQQQLQEANRRAQEYRHQLLKKEQEAEQYRLKLEAIARQ) are a coiled coil. The segment covering 428–448 (VTGSAGTTEPHTRVSMATVSS) has biased composition (polar residues).

As to quaternary structure, heterotetramer of two alpha and two beta subunits. The C-terminal is necessary for the formation of a heterotetrameric GABP-alpha-2/beta-2 complex, and also facilitates homotypic dimerization. Interacts with ADGRB2.

It localises to the nucleus. Its function is as follows. May function as transcription factor capable of interacting with purine rich repeats (GA repeats). In Homo sapiens (Human), this protein is GA-binding protein subunit beta-2 (GABPB2).